The sequence spans 261 residues: Triosephosphate isomerase (261 aa).

10–12 (NWK) lines the substrate pocket. Catalysis depends on H100, which acts as the Electrophile. The active-site Proton acceptor is the E172. Residues G178, S218, and 239-240 (GG) contribute to the substrate site.

The protein belongs to the triosephosphate isomerase family. As to quaternary structure, homodimer.

It localises to the cytoplasm. The enzyme catalyses D-glyceraldehyde 3-phosphate = dihydroxyacetone phosphate. The protein operates within carbohydrate biosynthesis; gluconeogenesis. Its pathway is carbohydrate degradation; glycolysis; D-glyceraldehyde 3-phosphate from glycerone phosphate: step 1/1. Functionally, involved in the gluconeogenesis. Catalyzes stereospecifically the conversion of dihydroxyacetone phosphate (DHAP) to D-glyceraldehyde-3-phosphate (G3P). The sequence is that of Triosephosphate isomerase from Saccharopolyspora erythraea (strain ATCC 11635 / DSM 40517 / JCM 4748 / NBRC 13426 / NCIMB 8594 / NRRL 2338).